The sequence spans 140 residues: Large-conductance mechanosensitive channel (140 aa).

A run of 2 helical transmembrane segments spans residues 16–36 (VIDL…VTAL) and 84–104 (INTV…VKLI).

It belongs to the MscL family. As to quaternary structure, homopentamer.

It is found in the cell inner membrane. In terms of biological role, channel that opens in response to stretch forces in the membrane lipid bilayer. May participate in the regulation of osmotic pressure changes within the cell. In Xanthomonas oryzae pv. oryzae (strain PXO99A), this protein is Large-conductance mechanosensitive channel.